Consider the following 210-residue polypeptide: Probable GTP-binding protein EngB (210 aa).

The 175-residue stretch at 30–204 (QGYEVAFAGR…YRVLADWMEL (175 aa)) folds into the EngB-type G domain. Residues 38-45 (GRSNAGKS), 64-68 (GRTQL), 82-85 (DLPG), 149-152 (TKAD), and 182-185 (LFSA) each bind GTP. Ser45 and Thr66 together coordinate Mg(2+).

Belongs to the TRAFAC class TrmE-Era-EngA-EngB-Septin-like GTPase superfamily. EngB GTPase family. Mg(2+) is required as a cofactor.

In terms of biological role, necessary for normal cell division and for the maintenance of normal septation. This chain is Probable GTP-binding protein EngB, found in Pseudomonas entomophila (strain L48).